Reading from the N-terminus, the 490-residue chain is Cobyric acid synthase (490 aa).

In terms of domain architecture, GATase cobBQ-type spans 253-440 (KLRVAAPAAP…LHGVFDEPAA (188 aa)). Cys-334 (nucleophile) is an active-site residue. His-432 is an active-site residue.

It belongs to the CobB/CobQ family. CobQ subfamily.

It participates in cofactor biosynthesis; adenosylcobalamin biosynthesis. Its function is as follows. Catalyzes amidations at positions B, D, E, and G on adenosylcobyrinic A,C-diamide. NH(2) groups are provided by glutamine, and one molecule of ATP is hydrogenolyzed for each amidation. This is Cobyric acid synthase from Chromobacterium violaceum (strain ATCC 12472 / DSM 30191 / JCM 1249 / CCUG 213 / NBRC 12614 / NCIMB 9131 / NCTC 9757 / MK).